The primary structure comprises 297 residues: Zinc finger protein 784 (297 aa).

Pro residues predominate over residues 1–12 (MAAARPDPPIPS). Positions 1–39 (MAAARPDPPIPSSPTRESPSPEPPDLVLVPDGRPVTPPG) are disordered. Residue Ser13 is modified to Phosphoserine. 3 C2H2-type zinc fingers span residues 64 to 86 (FHCA…EHGH), 100 to 122 (SRCH…YSLH), and 128 to 150 (YRCS…QHRH). The segment at 149 to 175 (RHGVEPGTSERLLPTTTTGQPNSRVAQ) is disordered. Polar residues predominate over residues 162-173 (PTTTTGQPNSRV). C2H2-type zinc fingers lie at residues 195 to 217 (FACR…ERVH), 223 to 245 (YHCS…ARIH), and 251 to 273 (FRCM…QRTH). The segment at 268 to 297 (KHQRTHFHGPGSGVGESRGQLRSSSVSQES) is disordered. The segment covering 287-297 (QLRSSSVSQES) has biased composition (polar residues).

This sequence belongs to the krueppel C2H2-type zinc-finger protein family.

It is found in the nucleus. Functionally, may be involved in transcriptional regulation. This is Zinc finger protein 784 (Znf784) from Mus musculus (Mouse).